The primary structure comprises 170 residues: Tubulin polymerization-promoting protein family member 2 (170 aa).

The disordered stretch occupies residues 127–170; that stretch reads TGTHKERFDESGKGKGIAGREEMTDNTGYVSGYKGSGTYDKKTK. Positions 129–149 are enriched in basic and acidic residues; sequence THKERFDESGKGKGIAGREEM.

Belongs to the TPPP family. In terms of tissue distribution, expressed in spermatids. Detected in liver cancer (at protein level).

It localises to the cytoplasm. It is found in the cytosol. The protein localises to the cell projection. The protein resides in the cilium. Its subcellular location is the flagellum. In terms of biological role, probable regulator of microtubule dynamics required for sperm motility. In contrast to other members of the family, has no microtubule bundling activity. This chain is Tubulin polymerization-promoting protein family member 2, found in Homo sapiens (Human).